We begin with the raw amino-acid sequence, 91 residues long: Small ribosomal subunit protein bS18 (91 aa).

The disordered stretch occupies residues 1–21 (MSDERTPQRSSGPRKKRPFQR). The span at 12–21 (GPRKKRPFQR) shows a compositional bias: basic residues.

The protein belongs to the bacterial ribosomal protein bS18 family. As to quaternary structure, part of the 30S ribosomal subunit. Forms a tight heterodimer with protein bS6.

Its function is as follows. Binds as a heterodimer with protein bS6 to the central domain of the 16S rRNA, where it helps stabilize the platform of the 30S subunit. The polypeptide is Small ribosomal subunit protein bS18 (Geotalea uraniireducens (strain Rf4) (Geobacter uraniireducens)).